Consider the following 284-residue polypeptide: MEMO1 family protein YG5714_2180 (284 aa).

It belongs to the MEMO1 family.

This is MEMO1 family protein YG5714_2180 from Saccharolobus islandicus (strain Y.G.57.14 / Yellowstone #1) (Sulfolobus islandicus).